The primary structure comprises 149 residues: Endoribonuclease YbeY (149 aa).

Zn(2+) contacts are provided by His-112, His-116, and His-122.

This sequence belongs to the endoribonuclease YbeY family. Zn(2+) serves as cofactor.

Its subcellular location is the cytoplasm. Functionally, single strand-specific metallo-endoribonuclease involved in late-stage 70S ribosome quality control and in maturation of the 3' terminus of the 16S rRNA. The polypeptide is Endoribonuclease YbeY (Methylibium petroleiphilum (strain ATCC BAA-1232 / LMG 22953 / PM1)).